Here is a 162-residue protein sequence, read N- to C-terminus: MPSFDIVSELELFEVNHAVQNTQKEIQTRFDFRGQDVSIELNEKSKEIKISTESDFQCEQVYSMLENHFYKRKIDVQALDPQKATASGKNVVQVIKLKDGLDSDTAKKINKAIKESGIKVQSSIQGDKIRVTDKKRDTLQQVMTFLREQQFGLPLQFNNFKD.

Belongs to the YajQ family.

Its function is as follows. Nucleotide-binding protein. In Acinetobacter baylyi (strain ATCC 33305 / BD413 / ADP1), this protein is Nucleotide-binding protein ACIAD3137.